The chain runs to 199 residues: Inactive glutathione S-transferase D3 (199 aa).

Positions 1–64 constitute a GST N-terminal domain; it reads MVGKALGLEF…YLVEKYGKDD (64 aa). Glutathione-binding positions include 34–36 and 48–50; these read HSI and ESR. Positions 70–199 constitute a GST C-terminal domain; the sequence is DIQKQAVINQ…RIEEKQNAAK (130 aa).

The protein belongs to the GST superfamily. Delta family. Homodimer.

Has no glutathione S-transferase activity. This is Inactive glutathione S-transferase D3 from Drosophila melanogaster (Fruit fly).